Reading from the N-terminus, the 156-residue chain is Small ribosomal subunit protein uS7 (156 aa).

It belongs to the universal ribosomal protein uS7 family. In terms of assembly, part of the 30S ribosomal subunit. Contacts proteins S9 and S11.

One of the primary rRNA binding proteins, it binds directly to 16S rRNA where it nucleates assembly of the head domain of the 30S subunit. Is located at the subunit interface close to the decoding center, probably blocks exit of the E-site tRNA. The polypeptide is Small ribosomal subunit protein uS7 (Bifidobacterium longum subsp. infantis (strain ATCC 15697 / DSM 20088 / JCM 1222 / NCTC 11817 / S12)).